We begin with the raw amino-acid sequence, 262 residues long: Tryptophan synthase alpha chain (262 aa).

Residues E48 and D59 each act as proton acceptor in the active site.

It belongs to the TrpA family. Tetramer of two alpha and two beta chains.

It carries out the reaction (1S,2R)-1-C-(indol-3-yl)glycerol 3-phosphate + L-serine = D-glyceraldehyde 3-phosphate + L-tryptophan + H2O. Its pathway is amino-acid biosynthesis; L-tryptophan biosynthesis; L-tryptophan from chorismate: step 5/5. In terms of biological role, the alpha subunit is responsible for the aldol cleavage of indoleglycerol phosphate to indole and glyceraldehyde 3-phosphate. The chain is Tryptophan synthase alpha chain from Helicobacter pylori (strain ATCC 700392 / 26695) (Campylobacter pylori).